The following is a 246-amino-acid chain: Probable septum site-determining protein MinC (246 aa).

This sequence belongs to the MinC family. As to quaternary structure, interacts with MinD and FtsZ.

In terms of biological role, cell division inhibitor that blocks the formation of polar Z ring septums. Rapidly oscillates between the poles of the cell to destabilize FtsZ filaments that have formed before they mature into polar Z rings. Prevents FtsZ polymerization. In Pseudomonas syringae pv. syringae (strain B728a), this protein is Probable septum site-determining protein MinC.